A 94-amino-acid chain; its full sequence is Large ribosomal subunit protein uL23 (94 aa).

It belongs to the universal ribosomal protein uL23 family. In terms of assembly, part of the 50S ribosomal subunit. Contacts protein L29, and trigger factor when it is bound to the ribosome.

Its function is as follows. One of the early assembly proteins it binds 23S rRNA. One of the proteins that surrounds the polypeptide exit tunnel on the outside of the ribosome. Forms the main docking site for trigger factor binding to the ribosome. The protein is Large ribosomal subunit protein uL23 of Trichlorobacter lovleyi (strain ATCC BAA-1151 / DSM 17278 / SZ) (Geobacter lovleyi).